Consider the following 699-residue polypeptide: Polyribonucleotide nucleotidyltransferase (699 aa).

The Mg(2+) site is built by aspartate 485 and aspartate 491. Residues 552-611 (PRITTIKINPEKIRDVIGKGGAVIRALTEETGTTIELEDDGTVRIASSNGEATKEAIRRI) enclose the KH domain. Positions 621–689 (GRIYNGKVIR…RQGRVRLSIK (69 aa)) constitute an S1 motif domain.

The protein belongs to the polyribonucleotide nucleotidyltransferase family. Component of the RNA degradosome, which is a multiprotein complex involved in RNA processing and mRNA degradation. Mg(2+) is required as a cofactor.

It localises to the cytoplasm. The catalysed reaction is RNA(n+1) + phosphate = RNA(n) + a ribonucleoside 5'-diphosphate. Functionally, involved in mRNA degradation. Catalyzes the phosphorolysis of single-stranded polyribonucleotides processively in the 3'- to 5'-direction. This Shewanella sp. (strain W3-18-1) protein is Polyribonucleotide nucleotidyltransferase.